The chain runs to 517 residues: Ascochitine biosynthesis cluster MFS transporter (517 aa).

The span at 1-12 shows a compositional bias: basic and acidic residues; the sequence is MSPDSRDPEAQR. Positions 1-45 are disordered; that stretch reads MSPDSRDPEAQRDVGLTKNTSSVNIPLESVKTDKTSNASPIMGPG. A glycan (N-linked (GlcNAc...) asparagine) is linked at N19. Transmembrane regions (helical) follow at residues 75–95, 111–131, 141–161, 172–192, 204–224, 232–252, 308–328, 347–367, 390–410, 421–441, 457–475, and 485–505; these read WVIT…STIF, VVMT…PLIW, LTPF…VGVA, FFIG…LADI, VYAA…GFVV, WTAW…LVFV, ILLL…LFFV, ALPL…ILFV, LMMV…WTSS, AGFP…SFLI, LIRS…PMYH, and LLGF…YYGP.

Belongs to the major facilitator superfamily. CAR1 family.

The protein resides in the membrane. Functionally, MFS transporter; part of the gene cluster that mediates the biosynthesis the mycotoxin ascochitine, an o-quinone methide that plays a possible protective role against other microbial competitors in nature and is considered to be important for pathogenicity of legume-associated Didymella species. The protein is Ascochitine biosynthesis cluster MFS transporter of Didymella fabae (Leaf and pod spot disease fungus).